The following is a 405-amino-acid chain: Probable tRNA sulfurtransferase (405 aa).

The THUMP domain maps to 60–165 (EPVNDRLKVV…QDGAYISNQL (106 aa)). ATP-binding positions include 183 to 184 (ML), 208 to 209 (HF), Arg-265, Gly-287, and Gln-296.

Belongs to the ThiI family.

It localises to the cytoplasm. It carries out the reaction [ThiI sulfur-carrier protein]-S-sulfanyl-L-cysteine + a uridine in tRNA + 2 reduced [2Fe-2S]-[ferredoxin] + ATP + H(+) = [ThiI sulfur-carrier protein]-L-cysteine + a 4-thiouridine in tRNA + 2 oxidized [2Fe-2S]-[ferredoxin] + AMP + diphosphate. The catalysed reaction is [ThiS sulfur-carrier protein]-C-terminal Gly-Gly-AMP + S-sulfanyl-L-cysteinyl-[cysteine desulfurase] + AH2 = [ThiS sulfur-carrier protein]-C-terminal-Gly-aminoethanethioate + L-cysteinyl-[cysteine desulfurase] + A + AMP + 2 H(+). Its pathway is cofactor biosynthesis; thiamine diphosphate biosynthesis. Its function is as follows. Catalyzes the ATP-dependent transfer of a sulfur to tRNA to produce 4-thiouridine in position 8 of tRNAs, which functions as a near-UV photosensor. Also catalyzes the transfer of sulfur to the sulfur carrier protein ThiS, forming ThiS-thiocarboxylate. This is a step in the synthesis of thiazole, in the thiamine biosynthesis pathway. The sulfur is donated as persulfide by IscS. The chain is Probable tRNA sulfurtransferase from Lactobacillus delbrueckii subsp. bulgaricus (strain ATCC BAA-365 / Lb-18).